Consider the following 305-residue polypeptide: MENKYTHGVLFYHEHSGLKNINQGIGEVTTALSSICKHLSIQLSENEGDIIKYCQEIKTKNYAKDVDILFILGGDGTVNELINGVMSHDLQLPIGILPGGTFNDFTKTLNIAPNHKQASEQMISAQVGTYDVIKINNQYALNFVGLGLIVQNAENVQDGSKDIFGKLSYIGSTVKTLLNPTQFNYQLSIDDKTYSGETTMILTANGPFIGGSRIPLTDLSPQDGELNTFIFNEQSFSILNDIFKKRDSMNWNEITQGIEHIPGKKISLTTDPAMKVDIDGEISLETPIDIEVIPNAIQLLTVNDL.

The DAGKc domain occupies 3–139 (NKYTHGVLFY…YDVIKINNQY (137 aa)). ATP is bound by residues serine 44, 74–80 (GDGTVNE), and threonine 101. Residues serine 220, aspartate 223, and glutamate 225 each coordinate Mg(2+). The active-site Proton acceptor is the glutamate 281.

This sequence belongs to the diacylglycerol/lipid kinase family. Requires Mg(2+) as cofactor.

In terms of biological role, may catalyze the ATP-dependent phosphorylation of lipids other than diacylglycerol (DAG). The sequence is that of Putative lipid kinase SaurJH9_0749 from Staphylococcus aureus (strain JH9).